We begin with the raw amino-acid sequence, 301 residues long: Large ribosomal subunit protein uL18y (301 aa).

The interval 247–267 is disordered; sequence RAEPNHKKTEKSAPKEHKRYN. Basic and acidic residues predominate over residues 249–261; that stretch reads EPNHKKTEKSAPK.

The protein belongs to the universal ribosomal protein uL18 family. In terms of assembly, component of the large ribosomal subunit (LSU).

The protein resides in the cytoplasm. The protein localises to the nucleus. It is found in the nucleolus. Its subcellular location is the nucleoplasm. Component of the ribosome, a large ribonucleoprotein complex responsible for the synthesis of proteins in the cell. The small ribosomal subunit (SSU) binds messenger RNAs (mRNAs) and translates the encoded message by selecting cognate aminoacyl-transfer RNA (tRNA) molecules. The large subunit (LSU) contains the ribosomal catalytic site termed the peptidyl transferase center (PTC), which catalyzes the formation of peptide bonds, thereby polymerizing the amino acids delivered by tRNAs into a polypeptide chain. The nascent polypeptides leave the ribosome through a tunnel in the LSU and interact with protein factors that function in enzymatic processing, targeting, and the membrane insertion of nascent chains at the exit of the ribosomal tunnel. Seems involved in the regulation of cell proliferation. Essential in leaf polarity establishment, probably having a role for translation in leaf dorsoventral patterning to specify leaf adaxial identity. This is Large ribosomal subunit protein uL18y from Arabidopsis thaliana (Mouse-ear cress).